The chain runs to 97 residues: Integration host factor subunit alpha (97 aa).

Belongs to the bacterial histone-like protein family. In terms of assembly, heterodimer of an alpha and a beta chain.

This protein is one of the two subunits of integration host factor, a specific DNA-binding protein that functions in genetic recombination as well as in transcriptional and translational control. The polypeptide is Integration host factor subunit alpha (Histophilus somni (strain 2336) (Haemophilus somnus)).